Consider the following 857-residue polypeptide: Autoinducer 2 sensor kinase/phosphatase LuxQ (857 aa).

The next 2 membrane-spanning stretches (helical) occupy residues 20–40 (IIFLVLGLITIGIFIQSYYFS) and 283–303 (LGLATSVVLMLMLSLAIRSWI). The 223-residue stretch at 490 to 712 (KMSHEIRTPL…TFYLSIPVEK (223 aa)) folds into the Histidine kinase domain. Position 493 is a phosphohistidine; by autocatalysis (H493). The 116-residue stretch at 735–850 (KVLLVEDNHT…ELHDELLHFK (116 aa)) folds into the Response regulatory domain. D784 is subject to 4-aspartylphosphate.

In terms of assembly, binds the complex formed by the autoinducer and LuxP.

Its subcellular location is the cell inner membrane. It catalyses the reaction ATP + protein L-histidine = ADP + protein N-phospho-L-histidine.. In terms of biological role, at low cell density, in absence of autoinducer has a kinase activity, and autophosphorylates on a histidine residue. The phosphoryl group is then transferred to an aspartate residue in the response regulator domain. The phosphoryl group is transferred to LuxU, and ultimately to LuxO. At high cell density, in the presence of autoinducer, the kinase activity is inactivated, and the response regulator domain has a phosphatase activity. This chain is Autoinducer 2 sensor kinase/phosphatase LuxQ (luxQ), found in Vibrio vulnificus (strain CMCP6).